We begin with the raw amino-acid sequence, 397 residues long: Small ribosomal subunit protein mS29 (397 aa).

The transit peptide at 1-17 directs the protein to the mitochondrion; sequence MLKGMTRLVSRVHKLDP. Residues Lys174 and Lys206 each carry the N6-acetyllysine modification.

Belongs to the mitochondrion-specific ribosomal protein mS29 family. In terms of assembly, component of the mitochondrial ribosome small subunit (28S) which comprises a 12S rRNA and about 30 distinct proteins. Interacts with DELE1. Interacts with NOA1.

Its subcellular location is the mitochondrion. The catalysed reaction is GTP + H2O = GDP + phosphate + H(+). In terms of biological role, as a component of the mitochondrial small ribosomal subunit, it plays a role in the translation of mitochondrial mRNAs. Involved in mediating interferon-gamma-induced cell death. Displays GTPase activity in vitro. The protein is Small ribosomal subunit protein mS29 of Bos taurus (Bovine).